The primary structure comprises 276 residues: Non-homologous end joining protein Ku (276 aa).

In terms of domain architecture, Ku spans 11 to 177 (ISFGLVHIPI…PEEIRSMEPL (167 aa)). The tract at residues 256–276 (QVKTQQKKEAAPKKERRRKTS) is disordered.

Belongs to the prokaryotic Ku family. Homodimer. Interacts with LigD.

With LigD forms a non-homologous end joining (NHEJ) DNA repair enzyme, which repairs dsDNA breaks with reduced fidelity. Binds linear dsDNA with 5'- and 3'- overhangs but not closed circular dsDNA nor ssDNA. Recruits and stimulates the ligase activity of LigD. In Heliobacterium modesticaldum (strain ATCC 51547 / Ice1), this protein is Non-homologous end joining protein Ku.